The sequence spans 744 residues: Merozoite surface protein 9 (744 aa).

The signal sequence occupies residues 1–23; that stretch reads MMNMKIVLFSLLLFVIRWNIISC. Residues 77–235 form an interaction with MSP1 and host SLC4A1/Band 3 region; it reads KELLKEKQYT…VNDEDDVNDE (159 aa). Disordered regions lie at residues 202–282, 459–487, 512–540, and 666–744; these read KSQG…ATAY, DNQAVDTKSMEEPKVKAQPALRGVEPTED, NNTPNVVPPTQSKKKNKNETVSGMDENFD, and VDAL…EESK. Over residues 211–224 the composition is skewed to polar residues; the sequence is SQNQNENNDNQKYQ. A run of 8 repeats spans residues 226–231, 232–237, 238–243, 244–249, 250–255, 256–261, 262–267, and 268–273. The segment at 226 to 273 is 8 X 6 AA tandem repeats of [VT]-N-D-[ED]-[ED]-D; the sequence is VNDEDDVNDEEDTNDDEDTNDEEDTNDDEDTNDDEDTNDEEDTNDEED. Over residues 226–274 the composition is skewed to acidic residues; it reads VNDEDDVNDEEDTNDDEDTNDEEDTNDDEDTNDDEDTNDEEDTNDEEDH. Positions 364–528 are interaction with MSP1 and host SLC4A1/Band 3; that stretch reads LKDNLINYEF…PPTQSKKKNK (165 aa). Residues 459-473 are compositionally biased toward basic and acidic residues; that stretch reads DNQAVDTKSMEEPKV. Over residues 512–521 the composition is skewed to low complexity; the sequence is NNTPNVVPPT. A coiled-coil region spans residues 644-734; it reads NQETEEEMEK…QEEEEEEEIV (91 aa). Composition is skewed to basic and acidic residues over residues 672 to 698 and 706 to 719; these read KNKEEEEKEKEKEKEKEEKEKEEKEKE and EKEKEKEEKEKEEK. Residues 720 to 734 are compositionally biased toward acidic residues; sequence EKEEEQEEEEEEEIV.

Belongs to the plasmodium ABRA family. In terms of assembly, forms a complex composed of MSP1, MSP6, MSP7, MSP9 and MSP3; within the complex, MSP6 and MSP9 mediate the binding to the host erythrocyte. Interacts with MSP1 subunits p19 and p42; the interaction is direct. Interacts with host SLC4A1/Band 3 protein (via the 5ABC region). MSP1 subunits p19 or p42, and MSP9 form a co-ligand complex that interacts with host SLC4A1/Band 3 protein. In terms of processing, not glycosylated.

It is found in the cell membrane. The protein localises to the parasitophorous vacuole lumen. Its subcellular location is the secreted. Functionally, during the asexual blood stage, involved in the sialic acid-independent (SAID) merozoite invasion of host erythrocytes by binding to host SLC4A1/Band 3 protein on the surface of the host erythrocyte. The chain is Merozoite surface protein 9 from Plasmodium falciparum (isolate 7G8).